We begin with the raw amino-acid sequence, 716 residues long: Fatty acid oxidation complex subunit alpha (716 aa).

The interval M1–A189 is enoyl-CoA hydratase/isomerase. D296 contributes to the substrate binding site. The segment at Q311–A716 is 3-hydroxyacyl-CoA dehydrogenase. Residues M324, D343, V400 to E402, K407, and S429 contribute to the NAD(+) site. H450 serves as the catalytic For 3-hydroxyacyl-CoA dehydrogenase activity. NAD(+) is bound at residue N453. Substrate is bound by residues N500 and Y660.

In the N-terminal section; belongs to the enoyl-CoA hydratase/isomerase family. It in the C-terminal section; belongs to the 3-hydroxyacyl-CoA dehydrogenase family. In terms of assembly, heterotetramer of two alpha chains (FadB) and two beta chains (FadA).

The catalysed reaction is a (3S)-3-hydroxyacyl-CoA + NAD(+) = a 3-oxoacyl-CoA + NADH + H(+). It carries out the reaction a (3S)-3-hydroxyacyl-CoA = a (2E)-enoyl-CoA + H2O. The enzyme catalyses a 4-saturated-(3S)-3-hydroxyacyl-CoA = a (3E)-enoyl-CoA + H2O. It catalyses the reaction (3S)-3-hydroxybutanoyl-CoA = (3R)-3-hydroxybutanoyl-CoA. The catalysed reaction is a (3Z)-enoyl-CoA = a 4-saturated (2E)-enoyl-CoA. It carries out the reaction a (3E)-enoyl-CoA = a 4-saturated (2E)-enoyl-CoA. It participates in lipid metabolism; fatty acid beta-oxidation. Involved in the aerobic and anaerobic degradation of long-chain fatty acids via beta-oxidation cycle. Catalyzes the formation of 3-oxoacyl-CoA from enoyl-CoA via L-3-hydroxyacyl-CoA. It can also use D-3-hydroxyacyl-CoA and cis-3-enoyl-CoA as substrate. The sequence is that of Fatty acid oxidation complex subunit alpha from Shewanella loihica (strain ATCC BAA-1088 / PV-4).